The chain runs to 370 residues: MVGKLKQNLLLACLVISSVTVFYLGQHAMECHHRIEERSQPARLENPKATVRTGLDIKANKTFTYHKNMPLIFIGGVPRSGTTLMRAMLDAHPDIRCGEETRVIPRILALKQMWSRSSKEKIRLDEAGVTDEVLDSAMQAFLLEVIVKHGEPAPYLCNKDPFALKSLTYLARLFPNAKFLLMVRDGRASVHSMISRKVTIAGFDLNSYRDCLTKWNRAIETMYNQCMEVGYKKCMLVHYEQLVLHPERWMRTLLKFLHIPWNHSVLHHEEMIGKAGGVSLSKVERSTDQVIKPVNVGALSKWVGKIPPDVLQDMAVIAPMLAKLGYDPYANPPNYGKPDPKILENTRRVHKGEFQLPDFLKEKPQTEQVE.

Residues 1 to 8 are Cytoplasmic-facing; sequence MVGKLKQN. A helical; Signal-anchor for type II membrane protein membrane pass occupies residues 9–25; it reads LLLACLVISSVTVFYLG. Residues 26–370 are Lumenal-facing; it reads QHAMECHHRI…KEKPQTEQVE (345 aa). Asn60 is a glycosylation site (N-linked (GlcNAc...) asparagine). 79–83 provides a ligand contact to 3'-phosphoadenylyl sulfate; it reads RSGTT. Residues Cys97 and Cys157 are joined by a disulfide bond. Glu100 acts as the Proton donor/acceptor in catalysis. Residues 102-106 are interaction with peptide substrate; sequence RVIPR. The 3'-phosphoadenylyl sulfate site is built by Arg184, Ser192, and Arg196. Cys226 and Cys234 are disulfide-bonded. Position 239 (Tyr239) interacts with 3'-phosphoadenylyl sulfate. Residue Asn262 is glycosylated (N-linked (GlcNAc...) asparagine). 3'-phosphoadenylyl sulfate contacts are provided by residues 286 to 295 and Lys301; that span reads STDQVIKPVN.

The protein belongs to the protein sulfotransferase family. As to quaternary structure, homodimer. Can also form heterodimers with TPST2. In terms of processing, N-glycosylated.

It localises to the golgi apparatus membrane. The enzyme catalyses L-tyrosyl-[protein] + 3'-phosphoadenylyl sulfate = O-sulfo-L-tyrosine-[protein] + adenosine 3',5'-bisphosphate + H(+). Catalyzes the O-sulfation of tyrosine residues within acidic motifs of polypeptides, using 3'-phosphoadenylyl sulfate (PAPS) as cosubstrate. The protein is Protein-tyrosine sulfotransferase 1 (Tpst1) of Rattus norvegicus (Rat).